The following is a 556-amino-acid chain: 2-succinyl-5-enolpyruvyl-6-hydroxy-3-cyclohexene-1-carboxylate synthase (556 aa).

It belongs to the TPP enzyme family. MenD subfamily. In terms of assembly, homodimer. Mg(2+) serves as cofactor. Mn(2+) is required as a cofactor. Requires thiamine diphosphate as cofactor.

It carries out the reaction isochorismate + 2-oxoglutarate + H(+) = 5-enolpyruvoyl-6-hydroxy-2-succinyl-cyclohex-3-ene-1-carboxylate + CO2. It functions in the pathway quinol/quinone metabolism; 1,4-dihydroxy-2-naphthoate biosynthesis; 1,4-dihydroxy-2-naphthoate from chorismate: step 2/7. Its pathway is quinol/quinone metabolism; menaquinone biosynthesis. In terms of biological role, catalyzes the thiamine diphosphate-dependent decarboxylation of 2-oxoglutarate and the subsequent addition of the resulting succinic semialdehyde-thiamine pyrophosphate anion to isochorismate to yield 2-succinyl-5-enolpyruvyl-6-hydroxy-3-cyclohexene-1-carboxylate (SEPHCHC). The polypeptide is 2-succinyl-5-enolpyruvyl-6-hydroxy-3-cyclohexene-1-carboxylate synthase (Salmonella gallinarum (strain 287/91 / NCTC 13346)).